The following is a 260-amino-acid chain: Glutathione S-transferase domain-containing protein DDB_G0274223 (260 aa).

The GST N-terminal domain maps to 7-96; that stretch reads KVDYIFYTNN…YLAQKYNTFL (90 aa). Residues 102 to 233 enclose the GST C-terminal domain; sequence NPHENSDVIT…GFKTFNPSAL (132 aa).

It belongs to the GST superfamily.

The sequence is that of Glutathione S-transferase domain-containing protein DDB_G0274223 from Dictyostelium discoideum (Social amoeba).